Consider the following 337-residue polypeptide: Cysteine proteinase 3 (337 aa).

The signal sequence occupies residues methionine 1–alanine 21. Residues glycine 22 to lysine 120 constitute a propeptide, activation peptide. Intrachain disulfides connect cysteine 142-cysteine 185, cysteine 176-cysteine 219, and cysteine 277-cysteine 326. Cysteine 145 is a catalytic residue. Active-site residues include histidine 284 and asparagine 304.

The protein belongs to the peptidase C1 family.

It is found in the lysosome. The polypeptide is Cysteine proteinase 3 (cprC) (Dictyostelium discoideum (Social amoeba)).